A 457-amino-acid chain; its full sequence is Dolichol phosphate-mannose mannosyltransferase (457 aa).

Over 1-12 (MKRLAKAAFSQN) the chain is Cytoplasmic. The chain crosses the membrane as a helical span at residues 13–33 (SLTAPIVSTFVYLISVVRVVL). At 34–91 (NGNWPVTSSDTAMFQHIGWMVFSGKRYYIDAWDPKPPLTLELATIIAYISNGDPHLQH) the chain is on the extracellular side. A helical transmembrane segment spans residues 92–112 (TLSVVSTIVAGILLTYLISHI). Residues 113–120 (TSEITGNQ) are Cytoplasmic-facing. A helical transmembrane segment spans residues 121 to 141 (FAGLLSGIVFITFPVIHYSAV). At 142–173 (FGYEPKYFVFLFGLGSIYLSRNPKPILSGAAA) the chain is on the extracellular side. Residues 174 to 194 (AASAGMWQFAIIFPIISFGII) traverse the membrane as a helical segment. The Cytoplasmic segment spans residues 195–211 (SRRKSKDLILKYVFGAT). Residues 212-232 (IIAFISLLPIYLQGGLVAMTV) form a helical membrane-spanning segment. Residues 233-259 (EVIIAPLYAGETQSFLYRLVKGVTHLK) are Extracellular-facing. The chain crosses the membrane as a helical span at residues 260 to 280 (LMIPIALLGMAGILLGFLDDI). At 281–283 (RER) the chain is on the cytoplasmic side. A helical membrane pass occupies residues 284–304 (WWVVGLLLWFCIQIFILDYDG). At 305-307 (ADD) the chain is on the extracellular side. Residues 308–328 (LFLGIILVSMGIGFAFEKLST) form a helical membrane-spanning segment. Topologically, residues 329-337 (KYESERINS) are cytoplasmic. A helical membrane pass occupies residues 338–358 (IVTAVVVCMLIWQVVTLGGVG). Residues 359–457 (VITNPYSYSG…EEKCGKWRLP (99 aa)) are Extracellular-facing.

It localises to the cell membrane. Its pathway is cell surface structure biogenesis; S-layer biogenesis. It participates in protein modification; protein glycosylation. Involved in the assembly of a N-linked pentasaccharide that decorates the S-layer glycoprotein and flagellins. Transfers mannose, the terminal pentasaccharide residue, from its dedicated dolichol phosphate carrier to the protein-bound glycan comprising the first four subunits of the N-linked pentasaccharide. The polypeptide is Dolichol phosphate-mannose mannosyltransferase (aglS) (Haloferax volcanii (strain ATCC 29605 / DSM 3757 / JCM 8879 / NBRC 14742 / NCIMB 2012 / VKM B-1768 / DS2) (Halobacterium volcanii)).